The following is an 801-amino-acid chain: MASPPPPPKLPVPGRRNILVTSALPYVNNVPHLGNIIGCVLSADVFARYCRLRGYNVIYICGTDEYGTATETKAMEEKCSPKEICDKYHAVHSEVYKWFDIKFDKFGRTSSPQQTEVCQAIFQKLMENNWLTENTMQQLYCDTCQRFLADRLVEGKCPTEGCNYEAARGDQCENCSKLLNPTELIDPKCKVCKNTPRVRDTDHLFLELPLLSDKLVNYINETSVAGMWSQNAIQATNAWLKEGLKPRCITRDLKWGVPVPHEKYKDKVFYVWFDAPIGYVSITASYTPDWEKWWKDPDNVELFQFMGKDNVPFHTVMFPSTLLGTGEKWTMMKTISVTEYLNYEAGKFSKSHGIGVFGNDAKDTNIPPEVWRYYLLTNRPEVSDTLFTWADLQAKLNSELLNNLGNFINRVLSFVAKPAGAGYDSIVPDAPNAESHPLTKALVEKTNKWVEQYLEAMEKVKLKQGLKSAMGISSDGNAYLQESQFWKLYKEDPAACAVVMKTSVGVVYLLACLLEPFMPSFSNEVLLQLNMTPEESLSFCDDKGEIAKAKRPWDFVSAGHKIGKPSPLFKELKDEEVESFRNKFAGSQAERSSKAQADAEAKKVADKLKGTKLSDGGQKKEQKKQSGGSKSKNAEVDVTVAKLDIRVGLIRKAQKHPDADSLYVEEIDVGEEAPRTVVSGLVKFIPLEEMQNRKVCVLCNLKPVAMRGIKSHAMVLAASNEDHTKVELVEPPESAAVGERVTFAGYSGEPEASLNAKSKTWEKLSADLHSNGELVACYKDVPFTTSAGVCKVKSIASGEIR.

Residues 25 to 35 carry the 'HIGH' region motif; sequence PYVNNVPHLGN. The 'KMSKS' region motif lies at 347–351; the sequence is KFSKS. Position 350 (K350) interacts with ATP. A disordered region spans residues 606–633; sequence DKLKGTKLSDGGQKKEQKKQSGGSKSKN. Residues 639–742 enclose the tRNA-binding domain; sequence TVAKLDIRVG…ESAAVGERVT (104 aa).

The protein belongs to the class-I aminoacyl-tRNA synthetase family.

It localises to the cytoplasm. The catalysed reaction is tRNA(Met) + L-methionine + ATP = L-methionyl-tRNA(Met) + AMP + diphosphate. The protein is Probable methionine--tRNA ligase of Oryza sativa subsp. japonica (Rice).